The following is a 209-amino-acid chain: Small ribosomal subunit protein mS23 (209 aa).

It belongs to the mitochondrion-specific ribosomal protein mS23 family. Component of the mitochondrial small ribosomal subunit.

Its subcellular location is the mitochondrion. In Sclerotinia sclerotiorum (strain ATCC 18683 / 1980 / Ss-1) (White mold), this protein is Small ribosomal subunit protein mS23 (rsm25).